Reading from the N-terminus, the 723-residue chain is Heme/hemopexin utilization protein C (723 aa).

The N-terminal stretch at 1 to 21 is a signal peptide; the sequence is MRFSKLSLAITTTLVTANALA. In terms of domain architecture, TBDR plug spans 36–147; it reads DPSRFAYTPE…LGGVVAMRTP (112 aa). Residues 158–723 enclose the TBDR beta-barrel domain; that stretch reads KFGVKIRQGY…NAKISAVYSF (566 aa). Positions 706–723 match the TonB C-terminal box motif; that stretch reads SLMEGTGRNAKISAVYSF.

The protein belongs to the TonB-dependent receptor family.

Its subcellular location is the cell outer membrane. Functionally, required for utilization of free heme at low concentrations. The sequence is that of Heme/hemopexin utilization protein C (hxuC) from Haemophilus influenzae (strain ATCC 51907 / DSM 11121 / KW20 / Rd).